The following is a 283-amino-acid chain: Homeobox-leucine zipper protein HAT2 (283 aa).

The disordered stretch occupies residues 64–134 (VNCEEDTGVS…GETSRKKLRL (71 aa)). The segment covering 73-84 (SSPNSTISSTIS) has biased composition (low complexity). Residues 127-186 (TSRKKLRLSKDQSAFLEETFKEHNTLNPKQKLALAKKLNLTARQVEVWFQNRRARTKLKQ) constitute a DNA-binding region (homeobox). Positions 194–215 (LKRCVEKLTEENRRLQKEAMEL) are leucine-zipper.

Belongs to the HD-ZIP homeobox family. Class II subfamily. As to quaternary structure, interacts with RBR1.

It localises to the nucleus. Probable transcription factor that plays a role in auxin-mediated morphogenesis. Negatively regulates lateral root elongation. In Arabidopsis thaliana (Mouse-ear cress), this protein is Homeobox-leucine zipper protein HAT2 (HAT2).